The chain runs to 551 residues: Putative ABC transporter ATP-binding protein BT9727_3105 (551 aa).

ABC transporter domains follow at residues 5–243 and 293–525; these read AEIN…FRPF and LSAE…SINR. Residues 39–46 and 327–334 each bind ATP; these read GGSGSGKT and GKNGTGKS.

The protein belongs to the ABC transporter superfamily.

The protein localises to the cell membrane. In terms of biological role, probably part of an ABC transporter complex. Responsible for energy coupling to the transport system. The polypeptide is Putative ABC transporter ATP-binding protein BT9727_3105 (Bacillus thuringiensis subsp. konkukian (strain 97-27)).